Reading from the N-terminus, the 155-residue chain is Fibroblast growth factor 1 (155 aa).

A2 carries the N-acetylalanine modification. The propeptide occupies A2–K15. Positions K24–K27 match the Nuclear localization signal motif. Residue N33 coordinates heparin. Positions K127–K143 are heparin-binding.

It belongs to the heparin-binding growth factors family. Monomer. Homodimer. Interacts with FGFR1, FGFR2, FGFR3 and FGFR4. Affinity between fibroblast growth factors (FGFs) and their receptors is increased by heparan sulfate glycosaminoglycans that function as coreceptors. Found in a complex with FGFBP1, FGF1 and FGF2. Interacts with FGFBP1. Part of a Cu(2+)-dependent multiprotein aggregate containing FGF1, S100A13 and SYT1. Interacts with SYT1. Interacts with S100A13. Interacts with LRRC59. Interacts with CSNKA, CSNKB and FIBP. While binding with LRRC59, CSNKA and FIBP seem mutually exclusive, CSNKB and FIBP may cooperatively interact with FGF1. Forms a ternary complex with FGFR1 and ITGAV:ITGB3 and induces the recruitment of PTPN11 to the complex. In the nucleus, phosphorylated by PKC/PRKCD. Predominantly expressed in kidney and brain. Detected at much lower levels in heart and skeletal muscle.

The protein localises to the secreted. It is found in the cytoplasm. It localises to the cell cortex. The protein resides in the cytosol. Its subcellular location is the nucleus. Plays an important role in the regulation of cell survival, cell division, angiogenesis, cell differentiation and cell migration. Functions as a potent mitogen in vitro. Acts as a ligand for FGFR1 and integrins. Binds to FGFR1 in the presence of heparin leading to FGFR1 dimerization and activation via sequential autophosphorylation on tyrosine residues which act as docking sites for interacting proteins, leading to the activation of several signaling cascades. Binds to integrin ITGAV:ITGB3. Its binding to integrin, subsequent ternary complex formation with integrin and FGFR1, and the recruitment of PTPN11 to the complex are essential for FGF1 signaling. Induces the phosphorylation and activation of FGFR1, FRS2, MAPK3/ERK1, MAPK1/ERK2 and AKT1. Can induce angiogenesis. In Homo sapiens (Human), this protein is Fibroblast growth factor 1 (FGF1).